The chain runs to 228 residues: Cytidylate kinase (228 aa).

ATP is bound at residue 10–18; the sequence is GPSGSGKGT.

It belongs to the cytidylate kinase family. Type 1 subfamily.

It localises to the cytoplasm. It catalyses the reaction CMP + ATP = CDP + ADP. The enzyme catalyses dCMP + ATP = dCDP + ADP. The polypeptide is Cytidylate kinase (Acinetobacter baumannii (strain ACICU)).